Reading from the N-terminus, the 282-residue chain is Short-chain dehydrogenase/reductase prx7 (282 aa).

Positions 23, 70, 150, 154, 183, and 185 each coordinate NADP(+). The active-site Proton acceptor is Y150. K154 acts as the Lowers pKa of active site Tyr in catalysis.

It belongs to the short-chain dehydrogenases/reductases (SDR) family.

Its pathway is sesquiterpene biosynthesis. Short-chain dehydrogenase/reductase; part of the gene cluster that mediates the biosynthesis of PR-toxin, a bicyclic sesquiterpene belonging to the eremophilane class and acting as a mycotoxin. The first step of the pathway is catalyzed by the aristolochene synthase which performs the cyclization of trans,trans-farnesyl diphosphate (FPP) to the bicyclic sesquiterpene aristolochene. Following the formation of aristolochene, the non-oxygenated aristolochene is converted to the trioxygenated intermediate eremofortin B, via 7-epi-neopetasone. This conversion appears to involve three enzymes, a hydroxysterol oxidase-like enzyme, the quinone-oxidase prx3 that forms the quinone-type-structure in the bicyclic nucleus of aristolochene with the C8-oxo group and the C-3 hydroxyl group, and the P450 monooxygenase prx9 that introduces the epoxide at the double bond between carbons 1 and 2. No monoxy or dioxy-intermediates have been reported to be released to the broth, so these three early oxidative reactions may be coupled together. Eremofortin B is further oxidized by another P450 monooxygenase, that introduces a second epoxide between carbons 7 and 11 prior to acetylation to eremofortin A by the acetyltransferase prx11. The second epoxidation may be performed by a second P450 monooxygenase. After the acetylation step, eremofortin A is converted to eremofortin C and then to PR-toxin. First the conversion of eremofortin A to eremofortin C proceeds by oxidation of the side chain of the molecule at C-12 and is catalyzed by the short-chain oxidoreductase prx1. The cytochrome P450 monooxygenase prx8 also plays a role in this step. The primary alcohol formed at C-12 is finally oxidized by the short-chain alcohol dehydrogenase prx4 that forms PR-toxin. In Penicillium rubens (strain ATCC 28089 / DSM 1075 / NRRL 1951 / Wisconsin 54-1255) (Penicillium chrysogenum), this protein is Short-chain dehydrogenase/reductase prx7.